Here is a 292-residue protein sequence, read N- to C-terminus: NAD(P)H-hydrate epimerase (292 aa).

A mitochondrion-targeting transit peptide spans 1-52; the sequence is MYGLRTLFSLGLLVGGARLGARVAQVGALGGTCPLGQGLVADGNSQCKQFRT. The 212-residue stretch at 68–279 folds into the YjeF N-terminal domain; that stretch reads AQAVDEELFN…ALEKKYSLNL (212 aa). A (6S)-NADPHX-binding site is contributed by 122 to 126; sequence NNGGD. Positions 123 and 189 each coordinate K(+). (6S)-NADPHX contacts are provided by residues 193–199 and Asp222; that span reads GFSFKGA. Ser225 lines the K(+) pocket.

The protein belongs to the NnrE/AIBP family. K(+) is required as a cofactor.

Its subcellular location is the mitochondrion. The protein resides in the secreted. The enzyme catalyses (6R)-NADHX = (6S)-NADHX. It catalyses the reaction (6R)-NADPHX = (6S)-NADPHX. In terms of biological role, catalyzes the epimerization of the S- and R-forms of NAD(P)HX, a damaged form of NAD(P)H that is a result of enzymatic or heat-dependent hydration. This is a prerequisite for the S-specific NAD(P)H-hydrate dehydratase to allow the repair of both epimers of NAD(P)HX. This is NAD(P)H-hydrate epimerase from Xenopus tropicalis (Western clawed frog).